The following is a 189-amino-acid chain: ATP synthase subunit delta (189 aa).

It belongs to the ATPase delta chain family. F-type ATPases have 2 components, F(1) - the catalytic core - and F(0) - the membrane proton channel. F(1) has five subunits: alpha(3), beta(3), gamma(1), delta(1), epsilon(1). F(0) has three main subunits: a(1), b(2) and c(10-14). The alpha and beta chains form an alternating ring which encloses part of the gamma chain. F(1) is attached to F(0) by a central stalk formed by the gamma and epsilon chains, while a peripheral stalk is formed by the delta and b chains.

It is found in the cell inner membrane. Functionally, f(1)F(0) ATP synthase produces ATP from ADP in the presence of a proton or sodium gradient. F-type ATPases consist of two structural domains, F(1) containing the extramembraneous catalytic core and F(0) containing the membrane proton channel, linked together by a central stalk and a peripheral stalk. During catalysis, ATP synthesis in the catalytic domain of F(1) is coupled via a rotary mechanism of the central stalk subunits to proton translocation. This protein is part of the stalk that links CF(0) to CF(1). It either transmits conformational changes from CF(0) to CF(1) or is implicated in proton conduction. This Methylorubrum populi (strain ATCC BAA-705 / NCIMB 13946 / BJ001) (Methylobacterium populi) protein is ATP synthase subunit delta.